Reading from the N-terminus, the 211-residue chain is Endonuclease Htp3 (211 aa).

Residues 1–20 (MLEVPVWIPILAFAVGLGLG) form the signal peptide. The RxLR signature appears at 48-51 (RTLR). Residues 48 to 198 (RTLRGKVVSV…REKRVNIWSL (151 aa)) enclose the TNase-like domain. Aspartate 77 lines the Ca(2+) pocket. Residue arginine 90 is part of the active site. Aspartate 95 contacts Ca(2+). Catalysis depends on residues glutamate 98 and arginine 138. Asparagine 153 carries an N-linked (GlcNAc...) asparagine glycan. Residues 200-211 (KRETPAQYKARK) are binding to the host cell surface.

This sequence in the N-terminal section; belongs to the RxLR effector family. In the C-terminal section; belongs to the LCL3 family. In terms of assembly, interacts with the host cell surface endoplasmin gp96, in order to get translocated into to host cell. Interacts with the effector Htp1, in order to get released from vesicles into the host cytosol.

Its subcellular location is the secreted. It localises to the host cytoplasm. The protein resides in the host cytosol. With respect to regulation, the nuclease activity shows a general salt dependency with a clear reduction by magnesium and sulfate ions. Functionally, effector involved in the disease saprolegniosis in salmonids and other freshwater fish, resulting in considerable economic losses in aquaculture. Within the host fish cells, Htp3 is released from vesicles into host cytosol where it degrades nucleic acids. This Saprolegnia parasitica (strain CBS 223.65) protein is Endonuclease Htp3 (HTP3).